Reading from the N-terminus, the 383-residue chain is Probable endoplasmic reticulum-Golgi intermediate compartment protein 3 (383 aa).

Over 1–26 the chain is Cytoplasmic; that stretch reads MLISQLKKFDAYPKTVDDFRVKTYTG. Residues 27–47 traverse the membrane as a helical segment; sequence AIVSIIGGVFILWLFFSQVTL. Over 48-347 the chain is Lumenal; it reads YFSTDIHHEL…GKSFASFLTN (300 aa). The chain crosses the membrane as a helical span at residues 348-368; the sequence is VCAIIGGVFTVFGIFDSFIYY. Topologically, residues 369–383 are cytoplasmic; it reads STKNLQKKIDLGKTF.

Belongs to the ERGIC family.

It localises to the endoplasmic reticulum-Golgi intermediate compartment membrane. It is found in the golgi apparatus. Its subcellular location is the cis-Golgi network membrane. The protein resides in the endoplasmic reticulum membrane. Functionally, possible role in transport between endoplasmic reticulum and Golgi. The protein is Probable endoplasmic reticulum-Golgi intermediate compartment protein 3 (ergic3) of Dictyostelium discoideum (Social amoeba).